We begin with the raw amino-acid sequence, 794 residues long: Phenylalanine--tRNA ligase beta subunit (794 aa).

The region spanning 40-158 is the tRNA-binding domain; the sequence is NSLNSELILG…LKKYIGSDVK (119 aa). In terms of domain architecture, B5 spans 402 to 477; the sequence is KNKQSLEIKL…RLYSYDKIDE (76 aa). 4 residues coordinate Mg(2+): aspartate 455, aspartate 461, glutamate 464, and glutamate 465. In terms of domain architecture, FDX-ACB spans 702–794; that stretch reads SKFQSSSRDL…NIKQMKVVIR (93 aa).

It belongs to the phenylalanyl-tRNA synthetase beta subunit family. Type 1 subfamily. In terms of assembly, tetramer of two alpha and two beta subunits. The cofactor is Mg(2+).

The protein localises to the cytoplasm. The enzyme catalyses tRNA(Phe) + L-phenylalanine + ATP = L-phenylalanyl-tRNA(Phe) + AMP + diphosphate + H(+). In Mycoplasma mycoides subsp. mycoides SC (strain CCUG 32753 / NCTC 10114 / PG1), this protein is Phenylalanine--tRNA ligase beta subunit.